The following is a 264-amino-acid chain: Phosphonoacetaldehyde hydrolase (264 aa).

Asp9 (nucleophile) is an active-site residue. Mg(2+) contacts are provided by Asp9 and Ala11. Lys50 serves as the catalytic Schiff-base intermediate with substrate. A Mg(2+)-binding site is contributed by Asp183.

The protein belongs to the HAD-like hydrolase superfamily. PhnX family. Homodimer. It depends on Mg(2+) as a cofactor.

The enzyme catalyses phosphonoacetaldehyde + H2O = acetaldehyde + phosphate + H(+). Its function is as follows. Involved in phosphonate degradation. This is Phosphonoacetaldehyde hydrolase from Bacillus cereus (strain AH187).